Consider the following 85-residue polypeptide: V-type proton ATPase subunit f (85 aa).

The next 2 membrane-spanning stretches (helical) occupy residues 13 to 33 and 56 to 76; these read CTGL…LFSI and CLGA…QVIV.

As to quaternary structure, V-ATPase is a heteromultimeric enzyme composed of a peripheral catalytic V1 complex (components A to H) attached to an integral membrane V0 proton pore complex (components: a, c, c', c'', d, e, f and VOA1).

It is found in the endoplasmic reticulum membrane. In terms of biological role, accessory component of the V0 complex of vacuolar(H+)-ATPase (V-ATPase), a multisubunit enzyme composed of a peripheral complex (V1) that hydrolyzes ATP and a membrane integral complex (V0) that translocates protons. V-ATPase is responsible for acidifying and maintaining the pH of intracellular compartments. This Schizosaccharomyces pombe (strain 972 / ATCC 24843) (Fission yeast) protein is V-type proton ATPase subunit f.